A 484-amino-acid chain; its full sequence is RuvB-like helicase 1 (484 aa).

Residues Met-1–Thr-11 show a composition bias toward low complexity. A disordered region spans residues Met-1–Leu-27. ATP is bound at residue Gly-87–Thr-94.

This sequence belongs to the RuvB family. As to quaternary structure, may form heterododecamers with RVB2. Component of the SWR1 chromatin remodeling complex, the INO80 chromatin remodeling complex, and of the R2TP complex.

Its subcellular location is the nucleus. It catalyses the reaction ATP + H2O = ADP + phosphate + H(+). DNA helicase which participates in several chromatin remodeling complexes, including the SWR1 and the INO80 complexes. The SWR1 complex mediates the ATP-dependent exchange of histone H2A for the H2A variant HZT1 leading to transcriptional regulation of selected genes by chromatin remodeling. The INO80 complex remodels chromatin by shifting nucleosomes and is involved in DNA repair. Also involved in pre-rRNA processing. This chain is RuvB-like helicase 1 (RVB1), found in Cryptococcus neoformans var. neoformans serotype D (strain B-3501A) (Filobasidiella neoformans).